Here is a 226-residue protein sequence, read N- to C-terminus: V-type proton ATPase subunit E (226 aa).

Belongs to the V-ATPase E subunit family. As to quaternary structure, V-ATPase is a heteromultimeric enzyme made up of two complexes: the ATP-hydrolytic V1 complex and the proton translocation V0 complex. The V1 complex consists of three catalytic AB heterodimers that form a heterohexamer, three peripheral stalks each consisting of EG heterodimers, one central rotor including subunits D and F, and the regulatory subunits C and H. The proton translocation complex V0 consists of the proton transport subunit a, a ring of proteolipid subunits c9c'', rotary subunit d, subunits e and f, and the accessory subunits VhaAC45 and ATP6AP2.

Subunit of the V1 complex of vacuolar(H+)-ATPase (V-ATPase), a multisubunit enzyme composed of a peripheral complex (V1) that hydrolyzes ATP and a membrane integral complex (V0) that translocates protons. V-ATPase is responsible for acidifying and maintaining the pH of intracellular compartments and in some cell types, is targeted to the plasma membrane, where it is responsible for acidifying the extracellular environment. This is V-type proton ATPase subunit E (VHA26) from Manduca sexta (Tobacco hawkmoth).